A 1400-amino-acid polypeptide reads, in one-letter code: DNA-directed RNA polymerase subunit beta' (1400 aa).

The Zn(2+) site is built by cysteine 70, cysteine 72, cysteine 85, and cysteine 88. The Mg(2+) site is built by aspartate 460, aspartate 462, and aspartate 464. Zn(2+) contacts are provided by cysteine 814, cysteine 888, cysteine 895, and cysteine 898.

It belongs to the RNA polymerase beta' chain family. As to quaternary structure, the RNAP catalytic core consists of 2 alpha, 1 beta, 1 beta' and 1 omega subunit. When a sigma factor is associated with the core the holoenzyme is formed, which can initiate transcription. It depends on Mg(2+) as a cofactor. The cofactor is Zn(2+).

It carries out the reaction RNA(n) + a ribonucleoside 5'-triphosphate = RNA(n+1) + diphosphate. Functionally, DNA-dependent RNA polymerase catalyzes the transcription of DNA into RNA using the four ribonucleoside triphosphates as substrates. In Methylococcus capsulatus (strain ATCC 33009 / NCIMB 11132 / Bath), this protein is DNA-directed RNA polymerase subunit beta'.